The following is a 443-amino-acid chain: MIKNDTIAAIATPPGEGSIAIVRISGPEAIQITDKIFSGSVPSFASHTAHLGIVNHKDRQIDQVLLLIMRAPRSFTGEDVIELQCHGGYFSCSQILEALVSEGARPALPGEFSQRAFLNGKIDLIQAEAIQNIIAADNLDAFFIAQNHFQGHFSKKIQLISSLIVESLAFIEVLADFPEEEQPDMDVPKQRLNEAMLIIEDLISSFDEGQRLAQGTSIVLAGHPNVGKSSLLNALTNKNRAIVTDIPGTTRDILEENWTLQGKRIRLIDSAGQRETDNLVEQEGIERAISAMEQSEGILWVMDATQPPPSLPEILFQKPSLLLWNKSDLASPPQLDTSLPQLAISAKTGEGIFELKQFIQKWMQQQQLGKNAKVFLVSSRHHTILQQMRSYLLSAKEGLLAQLPPELIALELRQALQATGNLSGSEVNETILGEIFSRFCIGK.

Positions 23, 82, and 121 each coordinate (6S)-5-formyl-5,6,7,8-tetrahydrofolate. Residues glycine 215–glutamine 364 enclose the TrmE-type G domain. Asparagine 225 contributes to the K(+) binding site. GTP-binding positions include asparagine 225–serine 230, threonine 244–threonine 250, and aspartate 269–glycine 272. Serine 229 contacts Mg(2+). K(+)-binding residues include threonine 244, isoleucine 246, and threonine 249. Mg(2+) is bound at residue threonine 250. Lysine 443 serves as a coordination point for (6S)-5-formyl-5,6,7,8-tetrahydrofolate.

Belongs to the TRAFAC class TrmE-Era-EngA-EngB-Septin-like GTPase superfamily. TrmE GTPase family. As to quaternary structure, homodimer. Heterotetramer of two MnmE and two MnmG subunits. K(+) is required as a cofactor.

The protein resides in the cytoplasm. Its function is as follows. Exhibits a very high intrinsic GTPase hydrolysis rate. Involved in the addition of a carboxymethylaminomethyl (cmnm) group at the wobble position (U34) of certain tRNAs, forming tRNA-cmnm(5)s(2)U34. The chain is tRNA modification GTPase MnmE from Chlamydia caviae (strain ATCC VR-813 / DSM 19441 / 03DC25 / GPIC) (Chlamydophila caviae).